The following is a 356-amino-acid chain: Thiamine thiazole synthase, chloroplastic (356 aa).

A chloroplast-targeting transit peptide spans 1–51; that stretch reads MAAMASTAFAPSVSSTTNKLFDSSFHGAPMSPSLLRLQPIKSSRPNNLSIS. Substrate-binding positions include Ala101, 121-122, Gly129, and Ala194; that span reads EQ. 2,3-didehydroalanine (Cys) is present on Cys223. Substrate-binding positions include Asp225, His240, Met292, and 302-304; that span reads RMG.

It belongs to the THI4 family. In terms of assembly, homooctamer. Fe cation serves as cofactor. During the catalytic reaction, a sulfide is transferred from Cys-223 to a reaction intermediate, generating a dehydroalanine residue.

The protein localises to the plastid. It localises to the chloroplast. The catalysed reaction is [ADP-thiazole synthase]-L-cysteine + glycine + NAD(+) = [ADP-thiazole synthase]-dehydroalanine + ADP-5-ethyl-4-methylthiazole-2-carboxylate + nicotinamide + 3 H2O + 2 H(+). Functionally, involved in biosynthesis of the thiamine precursor thiazole. Catalyzes the conversion of NAD and glycine to adenosine diphosphate 5-(2-hydroxyethyl)-4-methylthiazole-2-carboxylic acid (ADT), an adenylated thiazole intermediate. The reaction includes an iron-dependent sulfide transfer from a conserved cysteine residue of the protein to a thiazole intermediate. The enzyme can only undergo a single turnover, which suggests it is a suicide enzyme. May have additional roles in adaptation to various stress conditions and in DNA damage tolerance. The sequence is that of Thiamine thiazole synthase, chloroplastic from Citrus sinensis (Sweet orange).